The sequence spans 380 residues: Erythronate-4-phosphate dehydrogenase (380 aa).

Residues serine 45 and threonine 66 each coordinate substrate. Residues 126 to 127, aspartate 146, threonine 175, 206 to 208, and aspartate 232 each bind NAD(+); these read QV and ASR. Arginine 208 is an active-site residue. Residue glutamate 237 is part of the active site. Catalysis depends on histidine 254, which acts as the Proton donor. Glycine 257 serves as a coordination point for NAD(+). Substrate is bound at residue tyrosine 258.

The protein belongs to the D-isomer specific 2-hydroxyacid dehydrogenase family. PdxB subfamily. In terms of assembly, homodimer.

The protein localises to the cytoplasm. The catalysed reaction is 4-phospho-D-erythronate + NAD(+) = (R)-3-hydroxy-2-oxo-4-phosphooxybutanoate + NADH + H(+). The protein operates within cofactor biosynthesis; pyridoxine 5'-phosphate biosynthesis; pyridoxine 5'-phosphate from D-erythrose 4-phosphate: step 2/5. Catalyzes the oxidation of erythronate-4-phosphate to 3-hydroxy-2-oxo-4-phosphonooxybutanoate. The protein is Erythronate-4-phosphate dehydrogenase of Pseudomonas paraeruginosa (strain DSM 24068 / PA7) (Pseudomonas aeruginosa (strain PA7)).